The following is a 243-amino-acid chain: GTP cyclohydrolase 1 type 2 (243 aa).

Residues His63, His64, Asp102, His209, and Glu213 each contribute to the a divalent metal cation site.

The protein belongs to the GTP cyclohydrolase I type 2/NIF3 family. As to quaternary structure, homohexamer.

The catalysed reaction is GTP + H2O = 7,8-dihydroneopterin 3'-triphosphate + formate + H(+). The protein operates within cofactor biosynthesis; 7,8-dihydroneopterin triphosphate biosynthesis; 7,8-dihydroneopterin triphosphate from GTP: step 1/1. Functionally, converts GTP to dihydroneopterin triphosphate. Is not active with GDP, GMP, ATP, CTP or UTP as substrate. This Helicobacter pylori (strain ATCC 700392 / 26695) (Campylobacter pylori) protein is GTP cyclohydrolase 1 type 2.